Here is a 300-residue protein sequence, read N- to C-terminus: Protoheme IX farnesyltransferase (300 aa).

The next 9 helical transmembrane spans lie at 24-44, 48-68, 94-114, 118-138, 146-166, 172-192, 217-237, 239-259, and 278-298; these read VTQL…PGMV, VLIG…AINC, PQIL…LYTF, LTMW…TLLL, IVIG…AVTG, AWIL…VLAL, LHIL…FISG, SGAV…AYAW, and IVYL…RPLL.

Belongs to the UbiA prenyltransferase family. Protoheme IX farnesyltransferase subfamily.

Its subcellular location is the cell inner membrane. The catalysed reaction is heme b + (2E,6E)-farnesyl diphosphate + H2O = Fe(II)-heme o + diphosphate. The protein operates within porphyrin-containing compound metabolism; heme O biosynthesis; heme O from protoheme: step 1/1. Converts heme B (protoheme IX) to heme O by substitution of the vinyl group on carbon 2 of heme B porphyrin ring with a hydroxyethyl farnesyl side group. The protein is Protoheme IX farnesyltransferase of Burkholderia vietnamiensis (strain G4 / LMG 22486) (Burkholderia cepacia (strain R1808)).